We begin with the raw amino-acid sequence, 734 residues long: Tripartite terminase subunit 3 (734 aa).

A Nuclear localization signal motif is present at residues 184–190 (ASKRARV). Residues 259 to 266 (VPRRHGKT) carry the Walker A motif motif. The Walker B motif motif lies at 353–358 (LLFVDE). Glu358 serves as the catalytic For ATPase activity. Active-site for nuclease activity residues include Asp511, Glu583, and Asp707.

This sequence belongs to the herpesviridae TRM3 protein family. In terms of assembly, interacts with the terminase subunits TRM1 and TRM2. Interacts with portal protein.

It localises to the host nucleus. In terms of biological role, component of the molecular motor that translocates viral genomic DNA in empty capsid during DNA packaging. Forms a tripartite terminase complex together with TRM1 and TRM2 in the host cytoplasm. Once the complex reaches the host nucleus, it interacts with the capsid portal vertex. This portal forms a ring in which genomic DNA is translocated into the capsid. TRM3 carries an RNase H-like nuclease activity that plays an important role for the cleavage of concatemeric viral DNA into unit length genomes. The sequence is that of Tripartite terminase subunit 3 from Equus caballus (Horse).